We begin with the raw amino-acid sequence, 279 residues long: Secreted RxLR effector protein 90 (279 aa).

The N-terminal stretch at 1–19 (MKSAAAFATFLTLSVFVAT) is a signal peptide. The RxLR-dEER motif lies at 29–46 (RGLRSLADNQSTESSEGR). Disordered regions lie at residues 29–53 (RGLR…YNHH) and 135–176 (ATPA…NLAG). The N-linked (GlcNAc...) asparagine glycan is linked to N37. Low complexity predominate over residues 135-146 (ATPAPTTSVPSS). Residues 147 to 163 (LVNTDTSDNQLPTTPVA) show a composition bias toward polar residues. Positions 166–176 (QGGGIGSNLAG) are enriched in gly residues. N217 carries N-linked (GlcNAc...) asparagine glycosylation.

It belongs to the RxLR effector family.

It localises to the secreted. It is found in the host cell membrane. Its function is as follows. Secreted effector that completely suppresses the host cell death induced by cell death-inducing proteins. This Plasmopara viticola (Downy mildew of grapevine) protein is Secreted RxLR effector protein 90.